A 122-amino-acid chain; its full sequence is Large ribosomal subunit protein uL14 (122 aa).

It belongs to the universal ribosomal protein uL14 family. Part of the 50S ribosomal subunit. Forms a cluster with proteins L3 and L19. In the 70S ribosome, L14 and L19 interact and together make contacts with the 16S rRNA in bridges B5 and B8.

Binds to 23S rRNA. Forms part of two intersubunit bridges in the 70S ribosome. This is Large ribosomal subunit protein uL14 from Ruthia magnifica subsp. Calyptogena magnifica.